The sequence spans 581 residues: Dehydrocurvularin exporter (581 aa).

Polar residues predominate over residues 1-10 (MTDSPSLESN). The disordered stretch occupies residues 1–47 (MTDSPSLESNNKSDMDTPRPPASSHDEHDAAESVSEKQDSATTSPTG). Asparagine 11 is a glycosylation site (N-linked (GlcNAc...) asparagine). A compositionally biased stretch (basic and acidic residues) spans 24 to 39 (SHDEHDAAESVSEKQD). The next 14 membrane-spanning stretches (helical) occupy residues 61-81 (LVMF…GIIA), 96-116 (DVGW…PLWG), 126-146 (WVYL…AAAP), 159-179 (GWGA…VAPP), 184-204 (LLIG…PVIG), 215-235 (WCFW…LLFL), 251-271 (IILN…VCLT), 288-308 (VIAT…VEWL), 330-350 (IFCL…PIYF), 363-383 (VNTL…GGAI), 392-412 (YELA…ILDV), 424-444 (VLFG…VQGF), 456-476 (IMVM…QSLF), and 527-547 (VFAF…LIPF). Residues 552-581 (DHEKKPSKDAMASDEVKASEEVQQEKKVTV) are disordered. Basic and acidic residues predominate over residues 565-581 (DEVKASEEVQQEKKVTV).

This sequence belongs to the major facilitator superfamily. TCR/Tet family.

Its subcellular location is the cell membrane. Efflux pump that is probably involved in the export of dehydrocurvularin. In Alternaria cinerariae, this protein is Dehydrocurvularin exporter.